Here is a 243-residue protein sequence, read N- to C-terminus: 3-deoxy-manno-octulosonate cytidylyltransferase (243 aa).

This sequence belongs to the KdsB family.

It localises to the cytoplasm. It carries out the reaction 3-deoxy-alpha-D-manno-oct-2-ulosonate + CTP = CMP-3-deoxy-beta-D-manno-octulosonate + diphosphate. Its pathway is nucleotide-sugar biosynthesis; CMP-3-deoxy-D-manno-octulosonate biosynthesis; CMP-3-deoxy-D-manno-octulosonate from 3-deoxy-D-manno-octulosonate and CTP: step 1/1. It functions in the pathway bacterial outer membrane biogenesis; lipopolysaccharide biosynthesis. Activates KDO (a required 8-carbon sugar) for incorporation into bacterial lipopolysaccharide in Gram-negative bacteria. The chain is 3-deoxy-manno-octulosonate cytidylyltransferase from Helicobacter pylori (strain HPAG1).